The primary structure comprises 334 residues: MVGREKELSIHFVPGCCQLVEEEVNIPSRRVLITGATGLLGRAVYKEFQQSNWHAVGCGFRRARPKFEQVNLLDSEAVHHLIHDFQPHVIVHCAAERRPDVVESQPDAASQLNVGASGNLAKEAAAIGAFLIYISSDYVFDGTNPPYTEEDIPSPLNLYGKTKLDGEKAVLENNLGAAVLRIPVLYGEVEKLEESAVTVMFDKVQFSNKSANMDHWQQRFPTHVKDVASVCRQLAEKRMLDPSIKGTFHWSGNEQMTKYEMACAIADAFNLPSSHLRPITDSPVIGAQRPKNAQLDCSKLETLGIGQRTPFRIGIKESLWPFLIDKRWRQTVFH.

NADP(+) contacts are provided by residues 37 to 40 (TGLL), 60 to 62 (FRR), 71 to 72 (NL), cysteine 93, arginine 97, tyrosine 159, and leucine 185. Threonine 309 is subject to Phosphothreonine. Residues 319 to 334 (LWPFLIDKRWRQTVFH) are required for interaction with MAT2A.

The protein belongs to the dTDP-4-dehydrorhamnose reductase family. MAT2B subfamily. Heterotrimer; composed of a catalytic MAT2A homodimer that binds one regulatory MAT2B chain. Heterohexamer; composed of a central, catalytic MAT2A homotetramer flanked on either side by a regulatory MAT2B chain. NADP binding increases the affinity for MAT2A.

Its pathway is amino-acid biosynthesis; S-adenosyl-L-methionine biosynthesis; S-adenosyl-L-methionine from L-methionine: step 1/1. Functionally, regulatory subunit of S-adenosylmethionine synthetase 2, an enzyme that catalyzes the formation of S-adenosylmethionine from methionine and ATP. Regulates MAT2A catalytic activity by changing its kinetic properties, increasing its affinity for L-methionine. Can bind NADP (in vitro). The chain is Methionine adenosyltransferase 2 subunit beta (Mat2b) from Rattus norvegicus (Rat).